A 341-amino-acid chain; its full sequence is Glyceraldehyde-3-phosphate dehydrogenase, cytosolic (341 aa).

Residues arginine 15 to isoleucine 16, aspartate 37, and arginine 84 each bind NAD(+). Residues serine 155–threonine 157, threonine 186, threonine 215–glycine 216, and arginine 238 each bind D-glyceraldehyde 3-phosphate. Cysteine 156 serves as the catalytic Nucleophile. Asparagine 320 is a binding site for NAD(+).

The protein belongs to the glyceraldehyde-3-phosphate dehydrogenase family. As to quaternary structure, homotetramer.

It is found in the cytoplasm. It catalyses the reaction D-glyceraldehyde 3-phosphate + phosphate + NAD(+) = (2R)-3-phospho-glyceroyl phosphate + NADH + H(+). It functions in the pathway carbohydrate degradation; glycolysis; pyruvate from D-glyceraldehyde 3-phosphate: step 1/5. Functionally, key enzyme in glycolysis that catalyzes the first step of the pathway by converting D-glyceraldehyde 3-phosphate (G3P) into 3-phospho-D-glyceroyl phosphate. Essential for the maintenance of cellular ATP levels and carbohydrate metabolism. This Magnolia liliiflora (Mulan magnolia) protein is Glyceraldehyde-3-phosphate dehydrogenase, cytosolic (GAPC).